The primary structure comprises 424 residues: Light-independent protochlorophyllide reductase subunit N (424 aa).

Residues Cys27, Cys52, and Cys113 each coordinate [4Fe-4S] cluster.

This sequence belongs to the BchN/ChlN family. Protochlorophyllide reductase is composed of three subunits; BchL, BchN and BchB. Forms a heterotetramer of two BchB and two BchN subunits. The cofactor is [4Fe-4S] cluster.

It carries out the reaction chlorophyllide a + oxidized 2[4Fe-4S]-[ferredoxin] + 2 ADP + 2 phosphate = protochlorophyllide a + reduced 2[4Fe-4S]-[ferredoxin] + 2 ATP + 2 H2O. The protein operates within porphyrin-containing compound metabolism; bacteriochlorophyll biosynthesis (light-independent). Functionally, component of the dark-operative protochlorophyllide reductase (DPOR) that uses Mg-ATP and reduced ferredoxin to reduce ring D of protochlorophyllide (Pchlide) to form chlorophyllide a (Chlide). This reaction is light-independent. The NB-protein (BchN-BchB) is the catalytic component of the complex. In Halorhodospira halophila (strain DSM 244 / SL1) (Ectothiorhodospira halophila (strain DSM 244 / SL1)), this protein is Light-independent protochlorophyllide reductase subunit N.